Here is an 872-residue protein sequence, read N- to C-terminus: Leucine--tRNA ligase (872 aa).

The short motif at 42–52 is the 'HIGH' region element; sequence PYPSGKLHMGH. Positions 632–636 match the 'KMSKS' region motif; that stretch reads KMSKS. Lys635 contacts ATP.

It belongs to the class-I aminoacyl-tRNA synthetase family.

It is found in the cytoplasm. It catalyses the reaction tRNA(Leu) + L-leucine + ATP = L-leucyl-tRNA(Leu) + AMP + diphosphate. This Chromobacterium violaceum (strain ATCC 12472 / DSM 30191 / JCM 1249 / CCUG 213 / NBRC 12614 / NCIMB 9131 / NCTC 9757 / MK) protein is Leucine--tRNA ligase.